The primary structure comprises 487 residues: Cyclic AMP-dependent transcription factor ATF-2 (487 aa).

The C2H2-type zinc finger occupies 7-31; the sequence is FLCTAPGCGQRFTNEDHLAVHKHKH. Disordered stretches follow at residues 106 to 132 and 267 to 354; these read EEPS…DEKE and QHPQ…CRQK. The segment covering 298–319 has biased composition (low complexity); that stretch reads QQPATSTTETPASPAQPTQQTP. Residues 328 to 345 show a composition bias toward basic and acidic residues; that stretch reads AANEDPDEKRRKFLERNR. The region spanning 334–397 is the bZIP domain; the sequence is DEKRRKFLER…AQLKQLLLAH (64 aa). Residues 336–356 form a basic motif region; sequence KRRKFLERNRAAASRCRQKRK. Residues 362 to 390 form a leucine-zipper region; it reads LEKKAEDLSSLNGQLQNEVTLLRNEVAQL. Residues 387–396 carry the Nuclear export signal motif; sequence VAQLKQLLLA. The tract at residues 407-487 is disordered; that stretch reads KKSGYHTADK…PPSQAQPSGS (81 aa). Over residues 425 to 436 the composition is skewed to polar residues; sequence VPSSPHTEAIQH. Low complexity predominate over residues 437–449; the sequence is SSVSTSNGVSSTS. Over residues 457–468 the composition is skewed to polar residues; that stretch reads SVLTQLADQSSE.

This sequence belongs to the bZIP family. ATF subfamily. In terms of assembly, binds DNA as a dimer and can form a homodimer in the absence of DNA. Can form a heterodimer with JUN. Heterodimerization is essential for its transcriptional activity.

Its subcellular location is the nucleus. It localises to the cytoplasm. It is found in the mitochondrion outer membrane. Its function is as follows. Transcriptional activator which regulates the transcription of various genes, including those involved in anti-apoptosis, cell growth, and DNA damage response. Dependent on its binding partner, binds to CRE (cAMP response element) consensus sequences (5'-TGACGTCA-3') or to AP-1 (activator protein 1) consensus sequences (5'-TGACTCA-3'). The protein is Cyclic AMP-dependent transcription factor ATF-2 (ATF2) of Gallus gallus (Chicken).